The primary structure comprises 645 residues: Zinc finger protein 235 (645 aa).

The KRAB domain maps to 8 to 86 (VTFRDVAVVF…TSHDVNKLAR (79 aa)). 2 disordered regions span residues 112–144 (GAEQPSQAPEDDGCLENLPSNHSSSSDNQEFLS) and 255–280 (KKSPVHSTHKDTRHSPSVPIQPSVHP). The segment covering 129–144 (LPSNHSSSSDNQEFLS) has biased composition (polar residues). 13 C2H2-type zinc fingers span residues 285–307 (YWCHECGKGFRQSSALQTHQRVH), 313–335 (YRCDSCGKGFSRSSDLNIHRRVH), 341–363 (YKCEVCGKGFTQWAHLQAHERIH), 369–391 (YKCGDCGKRFSCSSNLHTHQRVH), 397–419 (YECNECGKRFSLSGNLDIHQRVH), 425–447 (YKCEECGKGFSSASSFQSHQRVH), 453–475 (FHCSVCGKNFSRSSHFLDHQRIH), 481–503 (YRCEVCGKRFPWSLSLHSHQSVH), 509–531 (YKCGECGKGFSHASSLQAHHSVH), 537–559 (FKCNVCQKQFSKTSNLQAHQRVH), 565–587 (YKCDTCGKAFSQKSSLQVHQRIH), 593–615 (FKCEECGKEFRWSVGLSSHQRVH), and 621–643 (YTCQQCGKGFSQASYFHMHQRVH).

The protein belongs to the krueppel C2H2-type zinc-finger protein family.

Its subcellular location is the nucleus. Functionally, may be involved in transcriptional regulation. In Mus musculus (Mouse), this protein is Zinc finger protein 235 (Znf235).